Consider the following 447-residue polypeptide: N-succinylarginine dihydrolase (447 aa).

Residues 19–28 (AGLSFGNEAS), asparagine 110, and 137–138 (HR) each bind substrate. The active site involves glutamate 174. Substrate is bound at residue arginine 214. The active site involves histidine 250. Aspartate 252 and asparagine 365 together coordinate substrate. Cysteine 371 functions as the Nucleophile in the catalytic mechanism.

It belongs to the succinylarginine dihydrolase family. In terms of assembly, homodimer.

The enzyme catalyses N(2)-succinyl-L-arginine + 2 H2O + 2 H(+) = N(2)-succinyl-L-ornithine + 2 NH4(+) + CO2. The protein operates within amino-acid degradation; L-arginine degradation via AST pathway; L-glutamate and succinate from L-arginine: step 2/5. Catalyzes the hydrolysis of N(2)-succinylarginine into N(2)-succinylornithine, ammonia and CO(2). The sequence is that of N-succinylarginine dihydrolase from Acinetobacter baumannii (strain ACICU).